The chain runs to 206 residues: Large ribosomal subunit protein bL25 (206 aa).

Belongs to the bacterial ribosomal protein bL25 family. CTC subfamily. In terms of assembly, part of the 50S ribosomal subunit; part of the 5S rRNA/L5/L18/L25 subcomplex. Contacts the 5S rRNA. Binds to the 5S rRNA independently of L5 and L18.

Its function is as follows. This is one of the proteins that binds to the 5S RNA in the ribosome where it forms part of the central protuberance. The sequence is that of Large ribosomal subunit protein bL25 from Ralstonia nicotianae (strain ATCC BAA-1114 / GMI1000) (Ralstonia solanacearum).